The following is an 86-amino-acid chain: Polcalcin Che a 3 (86 aa).

EF-hand domains follow at residues 8-43 (QDIA…LGSV) and 43-78 (VTPD…NRGL). Ca(2+)-binding residues include D21, N23, D25, K27, E32, D56, D58, D60, and E67.

This chain is Polcalcin Che a 3, found in Chenopodium album (Fat hen).